Consider the following 460-residue polypeptide: L-seryl-tRNA(Sec) selenium transferase (460 aa).

N6-(pyridoxal phosphate)lysine is present on K293.

It belongs to the SelA family. Pyridoxal 5'-phosphate is required as a cofactor.

The protein resides in the cytoplasm. It catalyses the reaction L-seryl-tRNA(Sec) + selenophosphate + H(+) = L-selenocysteinyl-tRNA(Sec) + phosphate. It functions in the pathway aminoacyl-tRNA biosynthesis; selenocysteinyl-tRNA(Sec) biosynthesis; selenocysteinyl-tRNA(Sec) from L-seryl-tRNA(Sec) (bacterial route): step 1/1. Converts seryl-tRNA(Sec) to selenocysteinyl-tRNA(Sec) required for selenoprotein biosynthesis. The chain is L-seryl-tRNA(Sec) selenium transferase from Haemophilus ducreyi (strain 35000HP / ATCC 700724).